Consider the following 1137-residue polypeptide: Guanine nucleotide exchange factor DBS (1137 aa).

A CRAL-TRIO domain is found at 52 to 224 (TAMATDEIMH…DLGGTLDYCH (173 aa)). A Spectrin repeat occupies 351-456 (LQLRHFEQGF…IARRRGLLSK (106 aa)). Residues serine 457 and serine 480 each carry the phosphoserine modification. Positions 503–529 (LETGAENKIQELNAIYKEYESILNQDL) form a coiled coil. The segment at 557-625 (LAARQTRPVQ…QGRGSAGEEE (69 aa)) is disordered. Low complexity predominate over residues 584 to 597 (GIRRGSENSSSEGG). Positions 607-616 (AKSEMSESRQ) are enriched in basic and acidic residues. A Phosphoserine modification is found at serine 620. In terms of domain architecture, DH spans 631–811 (LRRHVMSELL…LGILKAVNDS (181 aa)). The PH domain maps to 829-945 (KLLMQGSFSV…WVNEIRKVLT (117 aa)). Disordered regions lie at residues 955 to 1058 (SQHR…LVPG) and 1116 to 1137 (GPSG…RAHP). The segment covering 962-977 (QSQSLPLPAPTSTSPS) has biased composition (low complexity). Serine 1033, serine 1034, serine 1041, and serine 1042 each carry phosphoserine. Residues 1055–1116 (LVPGKYTVVA…PASSLSVRLG (62 aa)) enclose the SH3 domain. Over residues 1119–1128 (GSAQCLSSSG) the composition is skewed to polar residues.

Belongs to the MCF2 family. Interacts with GTP-bound RAC1. Interacts with CDC42. Interacts with RHOA. Interacts with CCPG1, which results in specific inhibition of its exchange activity toward RHOA, but does not affect its activity on CDC42.

The protein localises to the cytoplasm. The protein resides in the cell membrane. It is found in the endomembrane system. In terms of biological role, guanine nucleotide exchange factor that catalyzes guanine nucleotide exchange on RHOA and CDC42, and thereby contributes to the regulation of RHOA and CDC42 signaling pathways. Seems to lack activity with RAC1. Becomes activated and highly tumorigenic by truncation of the N-terminus. Isoform 5 activates CDC42. Does not catalyze guanine nucleotide exchange on CDC42. This chain is Guanine nucleotide exchange factor DBS (MCF2L), found in Homo sapiens (Human).